We begin with the raw amino-acid sequence, 266 residues long: Vitamin B12-binding protein (266 aa).

An N-terminal signal peptide occupies residues 1–22; that stretch reads MAKQMFRALVALLLTLPVWLYA. The Fe/B12 periplasmic-binding domain occupies 25 to 266; that stretch reads RVITLSPANT…QLCNALSQVN (242 aa). Cyanocob(III)alamin is bound by residues tyrosine 50 and 242 to 246; that span reads DWFER. A disulfide bond links cysteine 183 and cysteine 259.

Belongs to the BtuF family. As to quaternary structure, the complex is composed of two ATP-binding proteins (BtuD), two transmembrane proteins (BtuC) and a solute-binding protein (BtuF).

The protein resides in the periplasm. In terms of biological role, part of the ABC transporter complex BtuCDF involved in vitamin B12 import. Binds vitamin B12 and delivers it to the periplasmic surface of BtuC. The sequence is that of Vitamin B12-binding protein from Salmonella paratyphi A (strain ATCC 9150 / SARB42).